A 386-amino-acid chain; its full sequence is Phosphoglycerate kinase (386 aa).

Substrate-binding positions include 21–23 (DLN), arginine 36, 59–62 (HLGR), arginine 112, and arginine 145. ATP contacts are provided by residues lysine 196, glutamate 313, and 339–342 (GGDT).

This sequence belongs to the phosphoglycerate kinase family. Monomer.

The protein resides in the cytoplasm. The enzyme catalyses (2R)-3-phosphoglycerate + ATP = (2R)-3-phospho-glyceroyl phosphate + ADP. Its pathway is carbohydrate degradation; glycolysis; pyruvate from D-glyceraldehyde 3-phosphate: step 2/5. In Haemophilus influenzae (strain 86-028NP), this protein is Phosphoglycerate kinase.